The following is a 564-amino-acid chain: 3beta-hydroxysteroid-dehydrogenase/decarboxylase isoform 2 (564 aa).

16-21 (GGRGFA) contacts NAD(+). N-linked (GlcNAc...) asparagine glycans are attached at residues Asn146 and Asn158. 2 residues coordinate NAD(+): Tyr161 and Lys165. The active-site Proton donor is the Lys165. A Reticulon domain is found at 384–564 (VADTLLWKDL…EKLFGSKKHD (181 aa)). Transmembrane regions (helical) follow at residues 398–418 (IAIF…STVV) and 424–444 (ALLV…KIFG). The N-linked (GlcNAc...) asparagine glycan is linked to Asn474. The next 2 helical transmembrane spans lie at 486 to 506 (GNDW…SLAG) and 507 to 527 (AISL…AFLV).

This sequence belongs to the 3-beta-HSD family.

The protein localises to the endoplasmic reticulum membrane. The catalysed reaction is a 3beta-hydroxysteroid-4alpha-carboxylate + NAD(+) = a 3-oxosteroid + CO2 + NADH. The enzyme catalyses 4alpha-carboxy-4beta,14alpha-dimethyl-9beta,19-cyclo-5alpha-ergost-24(24(1))-en-3beta-ol + NAD(+) = cycloeucalenone + CO2 + NADH. The protein operates within steroid biosynthesis; zymosterol biosynthesis; zymosterol from lanosterol: step 4/6. In terms of biological role, 3beta-hydroxysteroid-dehydrogenase/decarboxylase involved in sterol synthesis. Catalyzes the formation of 3-oxosteroids from 3beta-hydroxysteroids-4alpha-carboxylate. Involved in the regulation of inflorescence internodes and leaves growth, probably by affecting auxin transporter activity possibly by altering sterol composition in the membranes. This is 3beta-hydroxysteroid-dehydrogenase/decarboxylase isoform 2 from Arabidopsis thaliana (Mouse-ear cress).